The following is a 122-amino-acid chain: FMN-binding protein (122 aa).

Monomer and homodimer. Requires FMN as cofactor.

The protein localises to the cytoplasm. Functionally, functions as a redox protein with a potential of -325 mV. The protein is FMN-binding protein of Nitratidesulfovibrio vulgaris (strain DSM 19637 / Miyazaki F) (Desulfovibrio vulgaris).